Reading from the N-terminus, the 143-residue chain is Peptide methionine sulfoxide reductase MsrB (143 aa).

The MsrB domain occupies 16-139 (DAELRRRLTP…NSAALNFESR (124 aa)). Zn(2+) is bound by residues Cys55, Cys58, Cys104, and Cys107. The active-site Nucleophile is the Cys128.

It belongs to the MsrB Met sulfoxide reductase family. Zn(2+) serves as cofactor.

It carries out the reaction L-methionyl-[protein] + [thioredoxin]-disulfide + H2O = L-methionyl-(R)-S-oxide-[protein] + [thioredoxin]-dithiol. The polypeptide is Peptide methionine sulfoxide reductase MsrB (Burkholderia orbicola (strain MC0-3)).